A 677-amino-acid chain; its full sequence is Methionine--tRNA ligase (677 aa).

The short motif at Pro15–His25 is the 'HIGH' region element. The Zn(2+) site is built by Cys146, Cys149, Cys159, and Cys162. The short motif at Lys333–Ser337 is the 'KMSKS' region element. Lys336 is an ATP binding site. The tRNA-binding domain maps to Asp575–Lys677.

The protein belongs to the class-I aminoacyl-tRNA synthetase family. MetG type 1 subfamily. As to quaternary structure, homodimer. Zn(2+) serves as cofactor.

It is found in the cytoplasm. The catalysed reaction is tRNA(Met) + L-methionine + ATP = L-methionyl-tRNA(Met) + AMP + diphosphate. Its function is as follows. Is required not only for elongation of protein synthesis but also for the initiation of all mRNA translation through initiator tRNA(fMet) aminoacylation. In Enterobacter sp. (strain 638), this protein is Methionine--tRNA ligase.